A 474-amino-acid chain; its full sequence is Adenosylhomocysteinase (474 aa).

Substrate-binding residues include threonine 53, aspartate 135, and glutamate 197. 198–200 contributes to the NAD(+) binding site; the sequence is TTT. Residues lysine 227 and aspartate 231 each contribute to the substrate site. Residues asparagine 232, 261 to 266, glutamate 284, asparagine 319, 340 to 342, and asparagine 388 each bind NAD(+); these read GYGDVG and IGH.

Belongs to the adenosylhomocysteinase family. NAD(+) is required as a cofactor.

It localises to the cytoplasm. It carries out the reaction S-adenosyl-L-homocysteine + H2O = L-homocysteine + adenosine. It participates in amino-acid biosynthesis; L-homocysteine biosynthesis; L-homocysteine from S-adenosyl-L-homocysteine: step 1/1. In terms of biological role, may play a key role in the regulation of the intracellular concentration of adenosylhomocysteine. The sequence is that of Adenosylhomocysteinase from Corynebacterium glutamicum (strain ATCC 13032 / DSM 20300 / JCM 1318 / BCRC 11384 / CCUG 27702 / LMG 3730 / NBRC 12168 / NCIMB 10025 / NRRL B-2784 / 534).